A 228-amino-acid polypeptide reads, in one-letter code: MRYLNQSEAQNIDQELFNEYAFSVDQLMELAGLSVAVAISKAYPRTGDGERLLVCSGPGNNGGDGLVAARHLKMFGYQPEIYYPKRPNRTLMNNLVTQCEKMEISFLTDLPSAQEMNFKYRLVVDAIFGFSFKGEVRAPFDDVLKTLKNVKIPLCAVDVPSGWDVEKGNPEGIQPEFLISLTAPKLCANHFKGRFHYLGGRFVPDLLLKKYELELPDFPGTDPCVLLE.

The YjeF N-terminal domain occupies 9 to 214 (AQNIDQELFN…DLLLKKYELE (206 aa)). 60–64 (NNGGD) is a binding site for (6S)-NADPHX. Asparagine 61 and aspartate 125 together coordinate K(+). (6S)-NADPHX is bound by residues 129–135 (GFSFKGE) and aspartate 158. Position 161 (serine 161) interacts with K(+).

It belongs to the NnrE/AIBP family. K(+) serves as cofactor.

It carries out the reaction (6R)-NADHX = (6S)-NADHX. The enzyme catalyses (6R)-NADPHX = (6S)-NADPHX. In terms of biological role, catalyzes the epimerization of the S- and R-forms of NAD(P)HX, a damaged form of NAD(P)H that is a result of enzymatic or heat-dependent hydration. This is a prerequisite for the S-specific NAD(P)H-hydrate dehydratase to allow the repair of both epimers of NAD(P)HX. The protein is NAD(P)H-hydrate epimerase of Nematostella vectensis (Starlet sea anemone).